Consider the following 1148-residue polypeptide: Envelopment polyprotein (1148 aa).

The first 23 residues, 1 to 23 (MGELSPVCLYLLLQGLLLCNTGA), serve as a signal peptide directing secretion. Residues 24-495 (ARNLNELKME…VPGLHGWATM (472 aa)) lie on the Lumenal side of the membrane. Disulfide bonds link cysteine 34/cysteine 159, cysteine 68/cysteine 165, cysteine 117/cysteine 136, cysteine 141/cysteine 146, cysteine 183/cysteine 193, and cysteine 218/cysteine 257. Residue asparagine 142 is glycosylated (N-linked (GlcNAc...) asparagine; by host). Asparagine 357 carries an N-linked (GlcNAc...) asparagine; by host glycan. Disulfide bonds link cysteine 386–cysteine 445, cysteine 390–cysteine 399, cysteine 415–cysteine 434, and cysteine 462–cysteine 485. Asparagine 409 carries N-linked (GlcNAc...) asparagine; by host glycosylation. The helical transmembrane segment at 496–516 (LLLLTFCFGWVLIPTITMILL) threads the bilayer. Residues 517 to 637 (KILIAFAYLC…LSLFRYRSRF (121 aa)) are Cytoplasmic-facing. Residues 526–543 (CSKYNTDSKFRILIEKVK) form a binding to the ribonucleoprotein region. 2 consecutive CCHC-type zinc fingers follow at residues 555-575 (CEVCQYECETAKELESHRKSC) and 580-601 (CPYCLNPSEATTSALQAHFKVC). Binding to the ribonucleoprotein regions lie at residues 598-615 (FKVCKLRSRFQENLRKSL), 602-613 (KLRSRFQENLRK), and 621-635 (MQGCYRTLSLFRYRS). Positions 621–644 (MQGCYRTLSLFRYRSRFFVGLVWC) constitute an ITAM domain. Residues 625–628 (YRTL) carry the YxxL motif. Residues 638-658 (FVGLVWCVLLVHHLIVWAASA) traverse the membrane as a helical segment. Residues 659–1114 (ETQNLNAGWT…EWILGVLNGN (456 aa)) lie on the Lumenal side of the membrane. 8 cysteine pairs are disulfide-bonded: cysteine 745/cysteine 780, cysteine 749/cysteine 787, cysteine 761/cysteine 894, cysteine 775/cysteine 905, cysteine 790/cysteine 913, cysteine 816/cysteine 825, cysteine 833/cysteine 842, and cysteine 873/cysteine 877. Residues 767–787 (YEYETGWGCNPPDCPGVGTGC) form a fusion loop region. Asparagine 937 carries an N-linked (GlcNAc...) asparagine; by host glycan. Cystine bridges form between cysteine 979/cysteine 1009, cysteine 1002/cysteine 1054, cysteine 1019/cysteine 1024, cysteine 1055/cysteine 1060, and cysteine 1094/cysteine 1098. The helical transmembrane segment at 1115 to 1135 (WMVVAVLVVLLILSILLFTLC) threads the bilayer. Binding to the ribonucleoprotein stretches follow at residues 1131 to 1143 (LFTLCCPRRPSYR) and 1131 to 1148 (LFTLCCPRRPSYRKEHKP). Residues 1136–1148 (CPRRPSYRKEHKP) lie on the Cytoplasmic side of the membrane.

The protein belongs to the hantavirus envelope glycoprotein family. Homodimer. Homotetramer; forms heterotetrameric Gn-Gc spikes in the pre-fusion conformation. Interacts (via C-terminus) with the nucleoprotein. Interacts with host TUFM; this interaction contributes to the virus-induced degradation of mitochondria by autophagy, which leads to degradation of host MAVS and inhibition of type I interferon (IFN) responses. Interacts with host MAP1LC3B; this interaction contributes to the virus-induced degradation of mitochondria by autophagy, which leads to degradation of host MAVS and inhibition of type I interferon (IFN) responses. As to quaternary structure, homodimer. Homotetramer; forms heterotetrameric Gn-Gc spikes in the pre-fusion conformation. Homotrimer; forms homotrimer in the post-fusion conformation at acidic pH. Interacts (via C-terminus) with the nucleoprotein. Post-translationally, envelope polyprotein precursor is quickly cleaved in vivo just after synthesis, presumably by host signal peptidase.

It localises to the virion membrane. The protein localises to the host cell surface. Its subcellular location is the host Golgi apparatus membrane. It is found in the host endoplasmic reticulum membrane. The protein resides in the host mitochondrion. Functionally, forms homotetramers with glycoprotein C at the surface of the virion. Attaches the virion to host cell receptors including integrin ITGAV/ITGB3. This attachment induces virion internalization predominantly through clathrin-dependent endocytosis. Mediates the assembly and budding of infectious virus particles through its interaction with the nucleocapsid protein and the viral genome. May dysregulate normal immune and endothelial cell responses through an ITAM motif. Translocates to mitochondria, binds to host TUFM and recruits MAP1LC3B. These interactions induce mitochondrial autophagy and therefore destruction of host MAVS leading to inhibition of type I interferon (IFN) responses. Concomitant breakdown of glycoprotein N is apparently prevented by the nucleoprotein that may inhibit Gn-stimulated autophagosome-lysosome fusion. Interacts with the viral genomic RNA. Forms homotetramers with glycoprotein N at the surface of the virion. Attaches the virion to host cell receptors including integrin ITGAV/ITGB3. This attachment induces virion internalization predominantly through clathrin-dependent endocytosis. Class II fusion protein that promotes fusion of viral membrane with host endosomal membrane after endocytosis of the virion. This is Envelopment polyprotein (GP) from Homo sapiens (Human).